The chain runs to 336 residues: Palmitoyltransferase SWF1 (336 aa).

Residues 1–2 (MS) are Lumenal-facing. Residues 3-23 (WNLLFVLLIGFVVLILLSPVF) form a helical membrane-spanning segment. Residues 24 to 50 (KSTWPFSTFYRNVFQPFLVDDQKYRWK) lie on the Cytoplasmic side of the membrane. The chain crosses the membrane as a helical span at residues 51 to 71 (LHLVPLFYTSIYLYLVYTYHM). The Lumenal segment spans residues 72–86 (RVESTIKNELFLLER). A helical membrane pass occupies residues 87–107 (ILIVPIIILPPVALGILAMVS). The Cytoplasmic segment spans residues 108–179 (RAEDSKDHKS…CIGKGNYLQF (72 aa)). The 51-residue stretch at 134-184 (IKCSTCRIVKPARSKHCSICNRCVLVADHHCIWINNCIGKGNYLQFYLFLI) folds into the DHHC domain. Residues 180–200 (YLFLISNIFSMCYAFLRLWYI) form a helical membrane-spanning segment. Residues 201–216 (SLNSTSTLPRAVLTLT) lie on the Lumenal side of the membrane. A helical membrane pass occupies residues 217–237 (ILCGCFTIICAIFTYLQLAIV). The Cytoplasmic portion of the chain corresponds to 238 to 336 (KEGMTTNEQD…TFLANLTDLI (99 aa)).

This sequence belongs to the DHHC palmitoyltransferase family. SWF1 subfamily.

The protein resides in the endoplasmic reticulum membrane. The catalysed reaction is L-cysteinyl-[protein] + hexadecanoyl-CoA = S-hexadecanoyl-L-cysteinyl-[protein] + CoA. Palmitoyltransferase that targets several endosomal SNAREs. Palmitoylates the SNAREs SNC1, SNC2, SYN8 and TLG1, at cysteine residues close to the cytoplasmic end of their transmembrane domain. May have a role in the cellular quality control of transmembrane domain-containing proteins. The chain is Palmitoyltransferase SWF1 (SWF1) from Saccharomyces cerevisiae (strain ATCC 204508 / S288c) (Baker's yeast).